The chain runs to 143 residues: Transcription antitermination protein NusB (143 aa).

The protein belongs to the NusB family.

Functionally, involved in transcription antitermination. Required for transcription of ribosomal RNA (rRNA) genes. Binds specifically to the boxA antiterminator sequence of the ribosomal RNA (rrn) operons. The chain is Transcription antitermination protein NusB from Desulforapulum autotrophicum (strain ATCC 43914 / DSM 3382 / VKM B-1955 / HRM2) (Desulfobacterium autotrophicum).